The sequence spans 604 residues: Inactive all-trans-retinol 13,14-reductase (604 aa).

The first 17 residues, 1-17 (MWWILLFLEWFVDWARG), serve as a signal peptide directing secretion.

Belongs to the carotenoid/retinoid oxidoreductase family. CrtISO subfamily.

The chain is Inactive all-trans-retinol 13,14-reductase (retsatl) from Danio rerio (Zebrafish).